Here is a 464-residue protein sequence, read N- to C-terminus: Trigger factor (464 aa).

The region spanning 166 to 245 is the PPIase FKBP-type domain; that stretch reads GDFLTIDITA…VKAVKERELP (80 aa). The tract at residues 426–464 is disordered; that stretch reads FVRPGGEEEAPAAEVTEADTAEGEATEVPAEDEKAEAKA. The segment covering 432-455 has biased composition (acidic residues); that stretch reads EEEAPAAEVTEADTAEGEATEVPA.

This sequence belongs to the FKBP-type PPIase family. Tig subfamily.

It is found in the cytoplasm. The enzyme catalyses [protein]-peptidylproline (omega=180) = [protein]-peptidylproline (omega=0). Its function is as follows. Involved in protein export. Acts as a chaperone by maintaining the newly synthesized protein in an open conformation. Functions as a peptidyl-prolyl cis-trans isomerase. The polypeptide is Trigger factor (Pseudarthrobacter chlorophenolicus (strain ATCC 700700 / DSM 12829 / CIP 107037 / JCM 12360 / KCTC 9906 / NCIMB 13794 / A6) (Arthrobacter chlorophenolicus)).